Consider the following 335-residue polypeptide: MLQGYSSVSQALLGTFFTWAMTAAGAALVFIFSSGQRRILDGSLGFAAGVMLAASYWSLLAPAVEMATSSGGFGAFAFFPVAVGFTLGAAFVYLADLLMPHLGAGEDPQTALALNLDPALVKKSDLKDPASLLFPERELSIRIDKRENGEVYQRKKLAATDFPEGAAPSGPVHGNSGQPGVSSWRRIALLILAITIHNIPEGLAVGVGFGAVEKTASATFESARNLAIGIGIQNFPEGLAVSLPLRGAGFSTWKAFWYGQLSGMVEPLAGVFGAFAVVLAEPVLPYALAFAAGAMVYVVMDDIIPEAQISGNGKLASWASILGFVVMMSLDVGLG.

7 helical membrane passes run 12–32, 44–64, 72–92, 187–207, 256–278, 283–300, and 315–335; these read LLGTFFTWAMTAAGAALVFIF, LGFAAGVMLAASYWSLLAPAV, GFGAFAFFPVAVGFTLGAAFV, IALLILAITIHNIPEGLAVGV, FWYGQLSGMVEPLAGVFGAFAVV, VLPYALAFAAGAMVYVVM, and LASWASILGFVVMMSLDVGLG.

This sequence belongs to the ZIP transporter (TC 2.A.5) family.

It is found in the cell membrane. The protein localises to the nucleus. It localises to the cytoplasm. Its subcellular location is the golgi apparatus. The catalysed reaction is Zn(2+)(in) = Zn(2+)(out). The enzyme catalyses Cu(2+)(in) = Cu(2+)(out). Zinc importer that regulates cytosolic zinc concentrations either via zinc influx from the extracellular compartment or efflux from intracellular organelles such as Golgi apparatus. May transport copper ions as well. The transport mechanism remains to be elucidated. This chain is Zinc transporter ZIP11 (Slc39a11), found in Rattus norvegicus (Rat).